A 97-amino-acid chain; its full sequence is uncharacterized protein (97 aa).

This is an uncharacterized protein from Bacillus subtilis (strain 168).